Here is a 424-residue protein sequence, read N- to C-terminus: Phosphomethylpyrimidine synthase (424 aa).

Substrate contacts are provided by residues N66, M95, Y124, H163, 185–187 (SRG), 226–229 (DGMR), and E265. H269 contacts Zn(2+). Position 292 (F292) interacts with substrate. H333 provides a ligand contact to Zn(2+). [4Fe-4S] cluster is bound by residues C408, C411, and C415.

This sequence belongs to the ThiC family. [4Fe-4S] cluster is required as a cofactor.

The catalysed reaction is 5-amino-1-(5-phospho-beta-D-ribosyl)imidazole + S-adenosyl-L-methionine = 4-amino-2-methyl-5-(phosphooxymethyl)pyrimidine + CO + 5'-deoxyadenosine + formate + L-methionine + 3 H(+). Its pathway is cofactor biosynthesis; thiamine diphosphate biosynthesis. Functionally, catalyzes the synthesis of the hydroxymethylpyrimidine phosphate (HMP-P) moiety of thiamine from aminoimidazole ribotide (AIR) in a radical S-adenosyl-L-methionine (SAM)-dependent reaction. The protein is Phosphomethylpyrimidine synthase of Thermotoga neapolitana (strain ATCC 49049 / DSM 4359 / NBRC 107923 / NS-E).